Reading from the N-terminus, the 352-residue chain is Molybdenum import ATP-binding protein ModC (352 aa).

The region spanning 1–229 (MLELNFSQTL…SVMHPWLPKE (229 aa)) is the ABC transporter domain. 31–38 (GVSGAGKT) is a binding site for ATP. A Mop domain is found at 289 to 352 (QTSIRNVLRA…AQVKSVSITA (64 aa)).

This sequence belongs to the ABC transporter superfamily. Molybdate importer (TC 3.A.1.8) family. In terms of assembly, the complex is composed of two ATP-binding proteins (ModC), two transmembrane proteins (ModB) and a solute-binding protein (ModA).

Its subcellular location is the cell inner membrane. The catalysed reaction is molybdate(out) + ATP + H2O = molybdate(in) + ADP + phosphate + H(+). Functionally, part of the ABC transporter complex ModABC involved in molybdenum import. Responsible for energy coupling to the transport system. The chain is Molybdenum import ATP-binding protein ModC from Salmonella paratyphi A (strain ATCC 9150 / SARB42).